We begin with the raw amino-acid sequence, 353 residues long: MTIALDKFTKDENDLFDIMDDWLRRDRFVFVGWSGLLLFPCAYFAVGGWFTGTTFVTSWYTHGLASSYLEGCNFLTAAVSTPANSLAHSLLLLWGPEAQGDFTRWCQLGGLWTFVALHGAFGLIGFMLRQFELARSVQLRPYNAIAFSGPIAVFVSVFLIYPLGQSGWFFAPSFGVAAIFRFILFFQGFHNWTLNPFHMMGVAGVLGAALLCAIHGATVENTLFEDGDGANTFRAFNPTQAEETYSMVTANRFWSQIFGVAFSNKRWLHFFMLFVPVTGLWMSALGVVGLALNLRAYDFVSQEIRAAEDPEFETFYTKNILLNEGIRAWMAAQDQPHENLIFPEEVLPRGNAL.

An N-acetylthreonine modification is found at T2. T2 carries the post-translational modification Phosphothreonine. A helical transmembrane segment spans residues 41 to 61; sequence CAYFAVGGWFTGTTFVTSWYT. Position 118 (H118) interacts with chlorophyll a. Residues 125–141 traverse the membrane as a helical segment; sequence GFMLRQFELARSVQLRP. Pheophytin a-binding residues include Q130 and N143. Residues 153–166 form a helical membrane-spanning segment; that stretch reads VFVSVFLIYPLGQS. H198 provides a ligand contact to chlorophyll a. The helical transmembrane segment at 208–228 threads the bilayer; it reads AALLCAIHGATVENTLFEDGD. H215 and F262 together coordinate a plastoquinone. H215 serves as a coordination point for Fe cation. H269 serves as a coordination point for Fe cation. A helical membrane pass occupies residues 279 to 295; that stretch reads GLWMSALGVVGLALNLR.

This sequence belongs to the reaction center PufL/M/PsbA/D family. As to quaternary structure, PSII is composed of 1 copy each of membrane proteins PsbA, PsbB, PsbC, PsbD, PsbE, PsbF, PsbH, PsbI, PsbJ, PsbK, PsbL, PsbM, PsbT, PsbX, PsbY, PsbZ, Psb30/Ycf12, at least 3 peripheral proteins of the oxygen-evolving complex and a large number of cofactors. It forms dimeric complexes. The D1/D2 heterodimer binds P680, chlorophylls that are the primary electron donor of PSII, and subsequent electron acceptors. It shares a non-heme iron and each subunit binds pheophytin, quinone, additional chlorophylls, carotenoids and lipids. There is also a Cl(-1) ion associated with D1 and D2, which is required for oxygen evolution. The PSII complex binds additional chlorophylls, carotenoids and specific lipids. is required as a cofactor.

It localises to the plastid. It is found in the chloroplast thylakoid membrane. It catalyses the reaction 2 a plastoquinone + 4 hnu + 2 H2O = 2 a plastoquinol + O2. Its function is as follows. Photosystem II (PSII) is a light-driven water:plastoquinone oxidoreductase that uses light energy to abstract electrons from H(2)O, generating O(2) and a proton gradient subsequently used for ATP formation. It consists of a core antenna complex that captures photons, and an electron transfer chain that converts photonic excitation into a charge separation. The D1/D2 (PsbA/PsbD) reaction center heterodimer binds P680, the primary electron donor of PSII as well as several subsequent electron acceptors. D2 is needed for assembly of a stable PSII complex. In Atropa belladonna (Belladonna), this protein is Photosystem II D2 protein.